We begin with the raw amino-acid sequence, 361 residues long: DNA polymerase subunit gamma-2, mitochondrial (361 aa).

The N-terminal 18 residues, methionine 1–arginine 18, are a transit peptide targeting the mitochondrion.

As to quaternary structure, component of the DNA polymerase gamma complex consisting of two subunits: the catalytic subunit DNApol-gamma/DNApolG1 and the accessory subunit PolG2/DNApol-gamma35. In terms of tissue distribution, expressed in ovaries (at protein level).

Its subcellular location is the mitochondrion. In terms of biological role, as accessory component of the DNA polymerase gamma complex is involved in the replication of mitochondrial DNA. Does not bind DNA. Essential for mitochondrial DNA maintenance and larval development. The protein is DNA polymerase subunit gamma-2, mitochondrial of Drosophila melanogaster (Fruit fly).